We begin with the raw amino-acid sequence, 107 residues long: Iron-binding protein IscA (107 aa).

Cys35, Cys99, and Cys101 together coordinate Fe cation.

Belongs to the HesB/IscA family. As to quaternary structure, homodimer; may form tetramers and higher multimers. Requires Fe cation as cofactor.

Its function is as follows. Is able to transfer iron-sulfur clusters to apo-ferredoxin. Multiple cycles of [2Fe2S] cluster formation and transfer are observed, suggesting that IscA acts catalytically. Recruits intracellular free iron so as to provide iron for the assembly of transient iron-sulfur cluster in IscU in the presence of IscS, L-cysteine and the thioredoxin reductase system TrxA/TrxB. This Photorhabdus laumondii subsp. laumondii (strain DSM 15139 / CIP 105565 / TT01) (Photorhabdus luminescens subsp. laumondii) protein is Iron-binding protein IscA.